Consider the following 214-residue polypeptide: Cytochrome b (214 aa).

Transmembrane regions (helical) follow at residues 31–51 (FGSM…FLAI), 75–96 (WIMQ…YIHI), 111–131 (WLSG…GYVL), and 176–196 (FFAL…IHIL). Residues His-81 and His-95 each contribute to the heme b site. Heme b-binding residues include His-180 and His-194. Position 199 (His-199) interacts with a ubiquinone.

The protein belongs to the cytochrome b family. As to quaternary structure, the cytochrome bc1 complex contains 3 respiratory subunits (MT-CYB, CYC1 and UQCRFS1), 2 core proteins (UQCRC1 and UQCRC2) and probably 6 low-molecular weight proteins. Requires heme b as cofactor.

The protein resides in the mitochondrion inner membrane. Component of the ubiquinol-cytochrome c reductase complex (complex III or cytochrome b-c1 complex) that is part of the mitochondrial respiratory chain. The b-c1 complex mediates electron transfer from ubiquinol to cytochrome c. Contributes to the generation of a proton gradient across the mitochondrial membrane that is then used for ATP synthesis. This is Cytochrome b (MT-CYB) from Bothrops atrox (Barba amarilla).